Here is a 226-residue protein sequence, read N- to C-terminus: PKHD-type hydroxylase Bind_0236 (226 aa).

One can recognise a Fe2OG dioxygenase domain in the interval 78 to 178; sequence TIFPPLFNRY…RIASFFWIQS (101 aa). Residues H96, D98, and H159 each contribute to the Fe cation site. Residue R169 coordinates 2-oxoglutarate.

Requires Fe(2+) as cofactor. L-ascorbate serves as cofactor.

The sequence is that of PKHD-type hydroxylase Bind_0236 from Beijerinckia indica subsp. indica (strain ATCC 9039 / DSM 1715 / NCIMB 8712).